A 770-amino-acid chain; its full sequence is Amyloid-beta precursor protein (770 aa).

Residues 1–17 (MLPGLALVLLAAWTARA) form the signal peptide. The Extracellular segment spans residues 18–701 (LEVPTDGNAG…AEDVGSNKGA (684 aa)). The segment at 28 to 123 (LLAEPQVAMF…PYRCLVGEFV (96 aa)) is GFLD subdomain. An E1 domain is found at 28–189 (LLAEPQVAMF…RGVEFVCCPL (162 aa)). Disulfide bonds link Cys38-Cys62, Cys73-Cys117, Cys98-Cys105, Cys133-Cys187, Cys144-Cys174, and Cys158-Cys186. 96 to 110 (NWCKRSRKQCKTHTH) is a binding site for heparin. The tract at residues 131-189 (DKCKFLHQERMDVCETHLHWHTVAKETCSEKSTNLHDYGMLLPCGIDKFRGVEFVCCPL) is cuBD subdomain. The copper-binding stretch occupies residues 135-155 (FLHQERMDVCETHLHWHTVAK). Cu(2+)-binding residues include His147, His151, and Tyr168. Residues 181 to 188 (GVEFVCCP) are zinc-binding. Residues Glu183, Cys186, and Cys187 each contribute to the Zn(2+) site. A compositionally biased stretch (acidic residues) spans 196 to 207 (IDSADAEEDDSD). The interval 196–284 (IDSADAEEDD…TTTTTTESVE (89 aa)) is disordered. Residue Ser198 is modified to Phosphoserine; by CK2. Position 206 is a phosphoserine; by CK1 (Ser206). Sulfotyrosine occurs at positions 217 and 262. A compositionally biased stretch (acidic residues) spans 228–264 (VAEEEEVADVEEEEAEDDEDDEDGDEVEEEAEEPYEE). The span at 268-281 (RTTSIATTTTTTTE) shows a compositional bias: low complexity. Disulfide bonds link Cys291/Cys341, Cys300/Cys324, and Cys316/Cys337. The BPTI/Kunitz inhibitor domain maps to 291–341 (CSEQAETGPCRAMISRWYFDVTEGKCAPFFYGGCGGNRNNFDTEEYCMAVC). Position 336 is a sulfotyrosine (Tyr336). The OX-2 motif lies at 344-365 (VMSQSLLKTTQEHLPQDPVKLP). Residues 374 to 565 (AVDKYLETPG…EEIQDEVDEL (192 aa)) form the E2 domain. The tract at residues 391 to 423 (FQKAKERLEAKHRERMSQVMREWEEAERQAKNL) is heparin-binding. Ser441 carries the post-translational modification Phosphoserine. Positions 491 to 522 (FNMLKKYVRAEQKDRQHTLKHFEHVRMVDPKK) are heparin-binding. At Tyr497 the chain carries Phosphotyrosine. The collagen-binding stretch occupies residues 523 to 540 (AAQIRSQVMTHLRVIYER). N-linked (GlcNAc...) asparagine glycosylation is found at Asn542 and Asn571. Cu(2+) contacts are provided by His677, Tyr681, His684, and His685. His677, Tyr681, His684, and His685 together coordinate Zn(2+). The segment at 695–722 (VGSNKGAIIGLMVGGVVIATVIVITLVM) is interaction with PSEN1. Residues 702-722 (IIGLMVGGVVIATVIVITLVM) form a helical membrane-spanning segment. Topologically, residues 723-770 (LKKKQYTSIHHGVVEVDAAVTPEERHLSKMQQNGYENPTYKFFEQMQN) are cytoplasmic. The short motif at 724–734 (KKKQYTSIHHG) is the Basolateral sorting signal element. Thr729 is modified (phosphothreonine). Ser730 carries the phosphoserine; by APP-kinase I modification. The interaction with G(o)-alpha stretch occupies residues 732–751 (HHGVVEVDAAVTPEERHLSK). The residue at position 743 (Thr743) is a Phosphothreonine; by CDK5 and MAPK10. The interval 756–770 (GYENPTYKFFEQMQN) is required for the interaction with KIF5B and for anterograde transport in axons. Tyr757 carries the phosphotyrosine; by ABL1 modification. The short motif at 757–762 (YENPTY) is the YENPXY motif; contains endocytosis signal element. Lys763 is covalently cross-linked (Glycyl lysine isopeptide (Lys-Gly) (interchain with G-Cter in ubiquitin)).

It belongs to the APP family. Binds, via its C-terminus, to the PID domain of several cytoplasmic proteins, including APBB family members, the APBA family, MAPK8IP1, SHC1 and NUMB and DAB1. Binding to DAB1 inhibits its serine phosphorylation. Interacts (via NPXY motif) with DAB2 (via PID domain); the interaction is impaired by tyrosine phosphorylation of the NPXY motif. Also interacts with GPCR-like protein BPP, APPBP1, IB1, KNS2 (via its TPR domains), APPBP2 (via BaSS) and DDB1. In vitro, it binds MAPT via the MT-binding domains. Associates with microtubules in the presence of ATP and in a kinesin-dependent manner. Interacts, through a C-terminal domain, with GNAO1. Amyloid-beta protein 42 binds CHRNA7 in hippocampal neurons. Amyloid-beta associates with HADH2. Interacts with CPEB1, ANKS1B and AGER. Interacts with ITM2B. Interacts with ITM2C. Interacts with IDE. Can form homodimers; dimerization is enhanced in the presence of Cu(2+) ions. Can form homodimers; this is promoted by heparin binding. Amyloid-beta protein 40 interacts with S100A9. CTF-alpha product of APP interacts with GSAP. Interacts with SORL1 (via N-terminal ectodomain); this interaction retains APP in the trans-Golgi network and reduces processing into soluble APP-alpha and amyloid-beta peptides. The C99 fragment also interacts with SORL1. Interacts with PLD3. Interacts with VDAC1. Interacts with NSG1; could regulate APP processing. Amyloid-beta protein 42 interacts with FPR2. Interacts (via transmembrane region) with PSEN1; the interaction is direct. Interacts with LRRK2. Interacts (via cytoplasmic domain) with KIF5B. Interacts (via C-terminus) with APBB2/FE65L1 (via C-terminus). Interacts (via intracellular domain) with APBB3. In terms of processing, proteolytically processed under normal cellular conditions. Cleavage either by alpha-secretase, beta-secretase or theta-secretase leads to generation and extracellular release of soluble APP peptides, S-APP-alpha and S-APP-beta, and the retention of corresponding membrane-anchored C-terminal fragments, C80, C83 and C99. Subsequent processing of C80 and C83 by gamma-secretase yields P3 peptides. This is the major secretory pathway and is non-amyloidogenic. Alternatively, presenilin/nicastrin-mediated gamma-secretase processing of C99 releases the amyloid-beta proteins, amyloid-beta protein 40 and amyloid-beta protein 42, major components of amyloid plaques, and the cytotoxic C-terminal fragments, gamma-CTF(50), gamma-CTF(57) and gamma-CTF(59). PSEN1 cleavage is more efficient with C83 than with C99 as substrate (in vitro). Amyloid-beta protein 40 and Amyloid-beta protein 42 are cleaved by ACE. Many other minor amyloid-beta peptides, amyloid-beta 1-X peptides, are found in cerebral spinal fluid (CSF) including the amyloid-beta X-15 peptides, produced from the cleavage by alpha-secretase. Proteolytically cleaved by caspases during neuronal apoptosis. Cleavage at Asp-739 by either caspase-3, -8 or -9 results in the production of the neurotoxic C31 peptide and the increased production of amyloid-beta peptides. Post-translationally, N- and O-glycosylated. In terms of processing, phosphorylation in the C-terminal on tyrosine, threonine and serine residues is neuron-specific. Phosphorylation can affect APP processing, neuronal differentiation and interaction with other proteins. Phosphorylated on Thr-743 in neuronal cells by Cdc5 kinase and Mapk10, in dividing cells by Cdc2 kinase in a cell-cycle dependent manner with maximal levels at the G2/M phase and, in vitro, by GSK-3-beta. The Thr-743 phosphorylated form causes a conformational change which reduces binding of Fe65 family members. In dopaminergic (DA) neurons, phosphorylation on Thr-743 by LRKK2 promotes the production and the nuclear translocation of the APP intracellular domain (AICD) which induces DA neuron apoptosis. Phosphorylation on Tyr-757 is required for SHC binding. Phosphorylated in the extracellular domain by casein kinases on both soluble and membrane-bound APP. This phosphorylation is inhibited by heparin. Extracellular binding and reduction of copper, results in a corresponding oxidation of Cys-144 and Cys-158, and the formation of a disulfide bond. Post-translationally, trophic-factor deprivation triggers the cleavage of surface APP by beta-secretase to release sAPP-beta which is further cleaved to release an N-terminal fragment of APP (N-APP). In terms of processing, amyloid-beta peptides are degraded by IDE. Sulfated on tyrosine residues.

It localises to the cell membrane. The protein resides in the membrane. Its subcellular location is the perikaryon. The protein localises to the cell projection. It is found in the growth cone. It localises to the clathrin-coated pit. The protein resides in the early endosome. Its subcellular location is the cytoplasmic vesicle. The protein localises to the endoplasmic reticulum. It is found in the golgi apparatus. It localises to the secreted. The protein resides in the cell surface. Its subcellular location is the nucleus. The protein localises to the cytoplasm. Functionally, functions as a cell surface receptor and performs physiological functions on the surface of neurons relevant to neurite growth, neuronal adhesion and axonogenesis. Interaction between APP molecules on neighboring cells promotes synaptogenesis. Involved in cell mobility and transcription regulation through protein-protein interactions. Can promote transcription activation through binding to APBB1-KAT5 and inhibit Notch signaling through interaction with Numb. Couples to apoptosis-inducing pathways such as those mediated by G(o) and JIP. Inhibits G(o)-alpha ATPase activity. Acts as a kinesin I membrane receptor, mediating the axonal transport of beta-secretase and presenilin 1. By acting as a kinesin I membrane receptor, plays a role in axonal anterograde transport of cargo towards synapses in axons. May be involved in copper homeostasis/oxidative stress through copper ion reduction. In vitro, copper-metallated APP induces neuronal death directly or is potentiated through Cu(2+)-mediated low-density lipoprotein oxidation. Can regulate neurite outgrowth through binding to components of the extracellular matrix such as heparin and collagen I and IV. Induces a AGER-dependent pathway that involves activation of p38 MAPK, resulting in internalization of amyloid-beta peptide and mitochondrial dysfunction in cultured cortical neurons. Provides Cu(2+) ions for GPC1 which are required for release of nitric oxide (NO) and subsequent degradation of the heparan sulfate chains on GPC1. Amyloid-beta peptides are lipophilic metal chelators with metal-reducing activity. Binds transient metals such as copper, zinc and iron. In terms of biological role, the gamma-CTF peptides as well as the caspase-cleaved peptides, including C31, are potent enhancers of neuronal apoptosis. This chain is Amyloid-beta precursor protein, found in Sus scrofa (Pig).